A 128-amino-acid polypeptide reads, in one-letter code: Large ribosomal subunit protein bL20c (128 aa).

This sequence belongs to the bacterial ribosomal protein bL20 family.

Its subcellular location is the plastid. Functionally, binds directly to 23S ribosomal RNA and is necessary for the in vitro assembly process of the 50S ribosomal subunit. It is not involved in the protein synthesizing functions of that subunit. The chain is Large ribosomal subunit protein bL20c (rpl20) from Epifagus virginiana (Beechdrops).